Consider the following 888-residue polypeptide: C2H2 zinc finger transcription factor sltA (888 aa).

Disordered regions lie at residues 1–78 (MSTS…QRSP), 132–176 (IDSQ…SSEN), and 388–407 (RSSM…ASAP). 3 stretches are compositionally biased toward polar residues: residues 23 to 32 (PSLSASTSIE), 167 to 176 (GLGTSLSSEN), and 388 to 397 (RSSMPSNREP). 2 consecutive C2H2-type zinc fingers follow at residues 500–522 (QKCK…EKTH) and 561–586 (YKCK…EKAH). The tract at residues 589 to 663 (DYVRSKHNGR…PTQTGSGDFP (75 aa)) is disordered. Over residues 602 to 632 (KASNGATPQTPSIATPSSKAQGITTPLTGSE) the composition is skewed to polar residues.

Its subcellular location is the nucleus. Its function is as follows. Transcription factor that contributes to azole resistance by coregulating the expression of the drug target erg11A and the drug efflux pump mdr1. Binds to the 5'-AGGCA-3' motif in the promoters of ergosterol biosynthesis and drug pump genes to regulate their expression. Is able to interact with the promoters of sltA, sltB, erg11A, erg13A, erg24A, mdr1, abcE and mfsC. Involved in antifungal drug resistance to azoles, terbinafine, and simvastatin but not amphotericin B or caspofungin. This Aspergillus fumigatus (strain CBS 144.89 / FGSC A1163 / CEA10) (Neosartorya fumigata) protein is C2H2 zinc finger transcription factor sltA.